Here is a 275-residue protein sequence, read N- to C-terminus: Lectin 8 (275 aa).

The N-terminal stretch at 1–31 is a signal peptide; that stretch reads MANSNPKLLVTQNPFSVFLLTFLLLITNVKS. Asn-55 and Asn-150 each carry an N-linked (GlcNAc...) asparagine glycan.

The protein belongs to the leguminous lectin family.

May be involved in arbuscular mycorrhizal (AM) symbiosis with AM fungi. This is Lectin 8 from Medicago truncatula (Barrel medic).